The primary structure comprises 373 residues: Putative F-box/kelch-repeat protein At3g19410 (373 aa).

Residues 1–46 (MTIPELPKDLIEEILCYVPATYLKRLRSTCKGWNRLFKDDRRFAKK) form the F-box domain. 3 Kelch repeats span residues 101–148 (RIFH…FVLG), 149–200 (YYQE…QCVS), and 329–373 (KLYI…EEKS).

This Arabidopsis thaliana (Mouse-ear cress) protein is Putative F-box/kelch-repeat protein At3g19410.